The sequence spans 85 residues: Scratcher peptide (85 aa).

An N-terminal signal peptide occupies residues 1–24; that stretch reads MTSVQSVTCCCLLWLMLSVQPITP. A propeptide spanning residues 25–38 is cleaved from the precursor; that stretch reads GSPGPAQLSRERSF. The residue at position 47 (glutamate 47) is a 4-carboxyglutamate. Residue aspartate 67 is modified to Aspartic acid 1-amide. The propeptide occupies 68 to 85; it reads KRDVVSPRIRRRKRSKAM.

The protein belongs to the conotoxin J superfamily. Contains 2 disulfide bonds. As to expression, expressed by the venom duct.

Its subcellular location is the secreted. Causes scratching in mice. The sequence is that of Scratcher peptide from Conus geographus (Geography cone).